The sequence spans 397 residues: S-adenosylmethionine synthase (397 aa).

His-16 is an ATP binding site. Mg(2+) is bound at residue Asp-18. Glu-44 contacts K(+). Positions 57 and 100 each coordinate L-methionine. A flexible loop region spans residues 100–110 (QSPDIAQGVNE). ATP contacts are provided by residues 175-177 (DAK), 242-243 (RF), Asp-251, 257-258 (RK), Ala-274, and Lys-278. Asp-251 contacts L-methionine. Residue Lys-282 participates in L-methionine binding.

It belongs to the AdoMet synthase family. In terms of assembly, homotetramer; dimer of dimers. Mg(2+) is required as a cofactor. The cofactor is K(+).

It is found in the cytoplasm. It carries out the reaction L-methionine + ATP + H2O = S-adenosyl-L-methionine + phosphate + diphosphate. It participates in amino-acid biosynthesis; S-adenosyl-L-methionine biosynthesis; S-adenosyl-L-methionine from L-methionine: step 1/1. Functionally, catalyzes the formation of S-adenosylmethionine (AdoMet) from methionine and ATP. The overall synthetic reaction is composed of two sequential steps, AdoMet formation and the subsequent tripolyphosphate hydrolysis which occurs prior to release of AdoMet from the enzyme. This is S-adenosylmethionine synthase from Streptococcus thermophilus (strain CNRZ 1066).